A 477-amino-acid polypeptide reads, in one-letter code: Pentatricopeptide repeat-containing protein At1g55630 (477 aa).

9 PPR repeats span residues 151-185, 186-220, 221-255, 256-290, 291-325, 326-360, 361-395, 396-430, and 431-465; these read TANCYHLLMKIFAECGEYKAMCRLIDEMIKDGYPT, TACTFNLLICTCGEAGLARDVVEQFIKSKTFNYRP, YKHSYNAILHSLLGVKQYKLIDWVYEQMLEDGFTP, DVLTYNIVMFANFRLGKTDRLYRLLDEMVKDGFSP, DLYTYNILLHHLATGNKPLAALNLLNHMREVGVEP, GVIHFTTLIDGLSRAGKLEACKYFMDETVKVGCTP, DVVCYTVMITGYISGGELEKAEEMFKEMTEKGQLP, NVFTYNSMIRGFCMAGKFKEACALLKEMESRGCNP, and NFVVYSTLVNNLKNAGKVLEAHEVVKDMVEKGHYV.

Belongs to the PPR family. P subfamily.

In Arabidopsis thaliana (Mouse-ear cress), this protein is Pentatricopeptide repeat-containing protein At1g55630.